The sequence spans 469 residues: Glutamate--tRNA ligase 2 (469 aa).

The 'HIGH' region signature appears at 8 to 18 (PSPTGFLHVGG). The 'KMSKS' region motif lies at 250-254 (KLSKR). K253 serves as a coordination point for ATP.

It belongs to the class-I aminoacyl-tRNA synthetase family. Glutamate--tRNA ligase type 1 subfamily. Monomer.

The protein localises to the cytoplasm. The catalysed reaction is tRNA(Glu) + L-glutamate + ATP = L-glutamyl-tRNA(Glu) + AMP + diphosphate. Catalyzes the attachment of glutamate to tRNA(Glu) in a two-step reaction: glutamate is first activated by ATP to form Glu-AMP and then transferred to the acceptor end of tRNA(Glu). In Thermotoga sp. (strain RQ2), this protein is Glutamate--tRNA ligase 2.